We begin with the raw amino-acid sequence, 464 residues long: UDP-N-acetylmuramate--L-alanine ligase (464 aa).

Residue 111-117 coordinates ATP; sequence GAHGKTT.

It belongs to the MurCDEF family.

The protein resides in the cytoplasm. The enzyme catalyses UDP-N-acetyl-alpha-D-muramate + L-alanine + ATP = UDP-N-acetyl-alpha-D-muramoyl-L-alanine + ADP + phosphate + H(+). It participates in cell wall biogenesis; peptidoglycan biosynthesis. Cell wall formation. This is UDP-N-acetylmuramate--L-alanine ligase from Dictyoglomus turgidum (strain DSM 6724 / Z-1310).